A 2156-amino-acid chain; its full sequence is MAM and LDL-receptor class A domain-containing protein 1 (2156 aa).

Positions 1–31 (MLFFLDRMLAFPMNETFCCLWIACVFNSTLA) are cleaved as a signal peptide. Topologically, residues 32 to 2076 (QQGTESFQCD…FTYAQNNTWT (2045 aa)) are vesicular. The LDL-receptor class A 1 domain occupies 33–68 (QGTESFQCDNGVSLPPDSICDFTDQCGDSSDERHCL). 2 disulfides stabilise this stretch: Cys-40–Cys-58 and Cys-52–Cys-67. 2 consecutive MAM domains span residues 71-229 (ERCD…GCLP) and 268-427 (QACG…ACGQ). An LDL-receptor class A 2 domain is found at 433–471 (LCSADEFPCTSGQCIAKESVCDSRQDCSDESDEDPATCS). 3 disulfides stabilise this stretch: Cys-434-Cys-446, Cys-441-Cys-459, and Cys-453-Cys-470. MAM domains lie at 474–637 (LTCD…ECEI) and 652–816 (SKCD…NCTL). Asn-813 carries N-linked (GlcNAc...) asparagine glycosylation. The region spanning 822–860 (SCEGLDHFWCRHTRACIEKLRLCDLVDDCGDRTDEVNCA) is the LDL-receptor class A 3 domain. Cystine bridges form between Cys-823–Cys-837, Cys-831–Cys-850, and Cys-844–Cys-859. Positions 863–1024 (LQCNFETGIC…DDLSFMDCTL (162 aa)) constitute an MAM 5 domain. The N-linked (GlcNAc...) asparagine glycan is linked to Asn-1049. Positions 1049–1086 (NCTDNEFICRSDGHCIEKMQKCDFKYDCPDKSDEASCV) constitute an LDL-receptor class A 4 domain. Disulfide bonds link Cys-1050/Cys-1063, Cys-1057/Cys-1076, and Cys-1070/Cys-1085. Residues 1088 to 1256 (EVCSFEKRSL…DDISFQDCSP (169 aa)) enclose the MAM 6 domain. Residue Asn-1199 is glycosylated (N-linked (GlcNAc...) asparagine). An LDL-receptor class A 5 domain is found at 1263–1301 (KCTDHEFMCANKHCIAKDKLCDFVNDCADNSDETTFICR). 3 disulfide bridges follow: Cys-1264–Cys-1276, Cys-1271–Cys-1289, and Cys-1283–Cys-1300. Residues 1305-1465 (GRCDFEFDLC…DIVLTENCLS (161 aa)) form the MAM 7 domain. A glycan (N-linked (GlcNAc...) asparagine) is linked at Asn-1414. In terms of domain architecture, LDL-receptor class A 6 spans 1482–1518 (FCPLGYRECHNGKCYRLEQSCNFVDNCGDNTDENECG). 3 disulfide bridges follow: Cys-1483–Cys-1495, Cys-1490–Cys-1508, and Cys-1502–Cys-1517. The 158-residue stretch at 1519 to 1676 (SSCTFEKGWC…DDIEFKNCTT (158 aa)) folds into the MAM 8 domain. Positions 1683-1720 (LCPEITDFLCRDKKCIASHLLCDYKPDCSDRSDEAHCA) constitute an LDL-receptor class A 7 domain. 3 cysteine pairs are disulfide-bonded: Cys-1684–Cys-1697, Cys-1692–Cys-1710, and Cys-1704–Cys-1719. The 166-residue stretch at 1727 to 1892 (GSCNFETSSG…DISFTPECVT (166 aa)) folds into the MAM 9 domain. 3 LDL-receptor class A domains span residues 1902–1939 (PCEADQFSCIYTLQCVPLSGKCDGHEDCIDGSDEMDCP), 1946–1982 (LCSNMEFPCSTDECIPSLLLCDGVPDCHFNEDELICS), and 1985–2023 (SCSNGALVCASSNSCIPAHQRCDGFADCMDFQLDESSCS). Intrachain disulfides connect Cys-1903–Cys-1916, Cys-1910–Cys-1929, Cys-1923–Cys-1938, Cys-1947–Cys-1959, Cys-1954–Cys-1972, Cys-1966–Cys-1981, Cys-1986–Cys-1999, Cys-1993–Cys-2012, Cys-2006–Cys-2022, Cys-2025–Cys-2036, Cys-2030–Cys-2045, and Cys-2047–Cys-2056. The EGF-like domain occupies 2024-2057 (ECPLNYCRNGGTCVVEKNGPMCRCRQGWKGNRCH). The chain crosses the membrane as a helical span at residues 2077–2097 (LLGIGLAFLMTHITVAVLCFL). Residues 2098–2156 (ANRKVPIRKTEGSGNCAFVNPVYGNWSNPEKTESSVYSFSNPLYGTTSGSLETLSHHLK) lie on the Cytoplasmic side of the membrane.

In terms of assembly, interacts with FGF19. As to expression, strongly expressed in the small intestine.

The protein resides in the cytoplasmic vesicle membrane. Functionally, enhances production and/or transport of FGF19 and thus has a role in regulation of bile acid synthesis. The sequence is that of MAM and LDL-receptor class A domain-containing protein 1 from Homo sapiens (Human).